The primary structure comprises 428 residues: Phosphomethylpyrimidine synthase 2 (428 aa).

Substrate-binding positions include Asn65, Met94, Tyr123, His158, 180–182, 221–224, and Glu260; these read SRG and DGMR. Zn(2+) is bound at residue His264. Tyr287 provides a ligand contact to substrate. His328 contributes to the Zn(2+) binding site. Residues Cys405, Cys408, and Cys412 each contribute to the [4Fe-4S] cluster site.

Belongs to the ThiC family. It depends on [4Fe-4S] cluster as a cofactor.

The catalysed reaction is 5-amino-1-(5-phospho-beta-D-ribosyl)imidazole + S-adenosyl-L-methionine = 4-amino-2-methyl-5-(phosphooxymethyl)pyrimidine + CO + 5'-deoxyadenosine + formate + L-methionine + 3 H(+). It functions in the pathway cofactor biosynthesis; thiamine diphosphate biosynthesis. In terms of biological role, catalyzes the synthesis of the hydroxymethylpyrimidine phosphate (HMP-P) moiety of thiamine from aminoimidazole ribotide (AIR) in a radical S-adenosyl-L-methionine (SAM)-dependent reaction. The polypeptide is Phosphomethylpyrimidine synthase 2 (Methanosarcina barkeri (strain Fusaro / DSM 804)).